A 490-amino-acid polypeptide reads, in one-letter code: Calcium-dependent protein kinase 12 (490 aa).

The Protein kinase domain maps to 22–280; sequence YFLGQVLGQG…AHQVLCHPWI (259 aa). Residues 28–36 and lysine 51 contribute to the ATP site; that span reads LGQGQFGTT. Residue aspartate 146 is the Proton acceptor of the active site. Residue serine 186 is modified to Phosphoserine. The tract at residues 286-316 is autoinhibitory domain; sequence APDKPLDCAVVSRLKKFSAMNKLKKMALRVI. EF-hand domains are found at residues 323 to 358, 359 to 394, 395 to 430, and 434 to 464; these read EEIG…VGSE, LMES…LNKL, EREE…FGIN, and LDEM…GNGT. Positions 336, 338, 340, 342, 347, 372, 374, 376, 378, 383, 408, 410, 412, 414, 419, 442, 444, 446, 448, and 453 each coordinate Ca(2+).

This sequence belongs to the protein kinase superfamily. Ser/Thr protein kinase family. CDPK subfamily. In terms of assembly, interacts weakly with DI19. As to expression, ubiquitously expressed.

It catalyses the reaction L-seryl-[protein] + ATP = O-phospho-L-seryl-[protein] + ADP + H(+). The catalysed reaction is L-threonyl-[protein] + ATP = O-phospho-L-threonyl-[protein] + ADP + H(+). With respect to regulation, activated by calcium. Autophosphorylation may play an important role in the regulation of the kinase activity. May play a role in signal transduction pathways that involve calcium as a second messenger. The chain is Calcium-dependent protein kinase 12 (CPK12) from Arabidopsis thaliana (Mouse-ear cress).